Reading from the N-terminus, the 404-residue chain is UBP1-associated protein 2C (404 aa).

Positions 1 to 29 (MDMMKKRKLDENGNGLNTNGGGTIGPTRL) are disordered. 2 RRM domains span residues 75–152 (RKLF…LAAS) and 167–248 (RKIY…GKKG). Disordered regions lie at residues 246–270 (KKGG…HGEG) and 344–404 (GSGQ…PPNY).

In terms of tissue distribution, expressed in root apical and lateral meristems, young leaves and embryos.

The protein localises to the nucleus. Heterogeneous nuclear ribonucleoprotein (hnRNP)-like protein that acts as a component of a complex regulating the turnover of mRNAs in the nucleus. Binds with high affinity to RNA molecules that contain U-rich sequences in 3'-UTRs. May function in complex with UBP1 and contribute to the stabilization of mRNAs in the nucleus. The sequence is that of UBP1-associated protein 2C (UBA2C) from Arabidopsis thaliana (Mouse-ear cress).